A 248-amino-acid polypeptide reads, in one-letter code: Triosephosphate isomerase (248 aa).

Substrate contacts are provided by asparagine 10 and lysine 12. Histidine 95 functions as the Electrophile in the catalytic mechanism. Glutamate 165 acts as the Proton acceptor in catalysis.

The protein belongs to the triosephosphate isomerase family. As to quaternary structure, homodimer.

The enzyme catalyses D-glyceraldehyde 3-phosphate = dihydroxyacetone phosphate. Its pathway is carbohydrate biosynthesis; gluconeogenesis. It participates in carbohydrate degradation; glycolysis; D-glyceraldehyde 3-phosphate from glycerone phosphate: step 1/1. This is Triosephosphate isomerase (TPI1) from Eremothecium gossypii (strain ATCC 10895 / CBS 109.51 / FGSC 9923 / NRRL Y-1056) (Yeast).